A 205-amino-acid polypeptide reads, in one-letter code: Latherin (205 aa).

Cys133 and Cys176 are disulfide-bonded.

Belongs to the BPI/LBP/Plunc superfamily. Plunc family. Monomer.

The protein localises to the secreted. Major protein in sweat, has surfactant properties. The sequence is that of Latherin (LATH) from Equus quagga burchellii (Burchell's zebra).